A 426-amino-acid polypeptide reads, in one-letter code: 3-phosphoshikimate 1-carboxyvinyltransferase (426 aa).

The 3-phosphoshikimate site is built by Lys22, Ser23, and Arg27. Residue Lys22 participates in phosphoenolpyruvate binding. Phosphoenolpyruvate is bound by residues Gly96 and Arg124. 3-phosphoshikimate is bound by residues Ser170, Ser171, Gln172, Ser198, Asp314, Asn337, and Lys341. Gln172 contacts phosphoenolpyruvate. Asp314 acts as the Proton acceptor in catalysis. The phosphoenolpyruvate site is built by Arg345, Arg387, and Lys412.

It belongs to the EPSP synthase family. In terms of assembly, monomer.

It localises to the cytoplasm. It carries out the reaction 3-phosphoshikimate + phosphoenolpyruvate = 5-O-(1-carboxyvinyl)-3-phosphoshikimate + phosphate. Its pathway is metabolic intermediate biosynthesis; chorismate biosynthesis; chorismate from D-erythrose 4-phosphate and phosphoenolpyruvate: step 6/7. Its function is as follows. Catalyzes the transfer of the enolpyruvyl moiety of phosphoenolpyruvate (PEP) to the 5-hydroxyl of shikimate-3-phosphate (S3P) to produce enolpyruvyl shikimate-3-phosphate and inorganic phosphate. This Vibrio atlanticus (strain LGP32) (Vibrio splendidus (strain Mel32)) protein is 3-phosphoshikimate 1-carboxyvinyltransferase.